A 122-amino-acid chain; its full sequence is S-adenosylmethionine decarboxylase proenzyme (122 aa).

Serine 69 acts as the Schiff-base intermediate with substrate; via pyruvic acid in catalysis. The residue at position 69 (serine 69) is a Pyruvic acid (Ser); by autocatalysis. The Proton acceptor; for processing activity role is filled by histidine 74. Cysteine 89 serves as the catalytic Proton donor; for catalytic activity.

It belongs to the prokaryotic AdoMetDC family. Type 1 subfamily. As to quaternary structure, heterotetramer of two alpha and two beta chains arranged as a dimer of alpha/beta heterodimers. It depends on pyruvate as a cofactor. Post-translationally, is synthesized initially as an inactive proenzyme. Formation of the active enzyme involves a self-maturation process in which the active site pyruvoyl group is generated from an internal serine residue via an autocatalytic post-translational modification. Two non-identical subunits are generated from the proenzyme in this reaction, and the pyruvate is formed at the N-terminus of the alpha chain, which is derived from the carboxyl end of the proenzyme. The post-translation cleavage follows an unusual pathway, termed non-hydrolytic serinolysis, in which the side chain hydroxyl group of the serine supplies its oxygen atom to form the C-terminus of the beta chain, while the remainder of the serine residue undergoes an oxidative deamination to produce ammonia and the pyruvoyl group blocking the N-terminus of the alpha chain.

It catalyses the reaction S-adenosyl-L-methionine + H(+) = S-adenosyl 3-(methylsulfanyl)propylamine + CO2. It participates in amine and polyamine biosynthesis; S-adenosylmethioninamine biosynthesis; S-adenosylmethioninamine from S-adenosyl-L-methionine: step 1/1. In terms of biological role, catalyzes the decarboxylation of S-adenosylmethionine to S-adenosylmethioninamine (dcAdoMet), the propylamine donor required for the synthesis of the polyamines spermine and spermidine from the diamine putrescine. This chain is S-adenosylmethionine decarboxylase proenzyme, found in Sulfurisphaera tokodaii (strain DSM 16993 / JCM 10545 / NBRC 100140 / 7) (Sulfolobus tokodaii).